The sequence spans 72 residues: Translation initiation factor IF-1 (72 aa).

Residues 1 to 72 enclose the S1-like domain; sequence MSKDDVIEID…DKGRITYRYK (72 aa).

The protein belongs to the IF-1 family. In terms of assembly, component of the 30S ribosomal translation pre-initiation complex which assembles on the 30S ribosome in the order IF-2 and IF-3, IF-1 and N-formylmethionyl-tRNA(fMet); mRNA recruitment can occur at any time during PIC assembly.

The protein localises to the cytoplasm. Functionally, one of the essential components for the initiation of protein synthesis. Stabilizes the binding of IF-2 and IF-3 on the 30S subunit to which N-formylmethionyl-tRNA(fMet) subsequently binds. Helps modulate mRNA selection, yielding the 30S pre-initiation complex (PIC). Upon addition of the 50S ribosomal subunit IF-1, IF-2 and IF-3 are released leaving the mature 70S translation initiation complex. In Campylobacter hominis (strain ATCC BAA-381 / DSM 21671 / CCUG 45161 / LMG 19568 / NCTC 13146 / CH001A), this protein is Translation initiation factor IF-1.